The primary structure comprises 563 residues: IQCJ-SCHIP1 readthrough transcript protein (563 aa).

In terms of domain architecture, IQ spans 47–67; it reads ESKVKIIQRAWREYLQRQEPL. 4 disordered regions span residues 63–150, 164–295, 312–336, and 384–430; these read RQEP…VSAL, VIDE…EPPV, FREQ…NERE, and SGSD…SLDD. The span at 76-87 shows a compositional bias: low complexity; sequence SVSSEKLSSSVS. Polar residues predominate over residues 88–97; that stretch reads MNTFSDSSTP. The span at 108–143 shows a compositional bias: low complexity; that stretch reads SDAGSSSSSSRASSQSNSTKVTPCSECKSSSSPGGS. Over residues 168–182 the composition is skewed to acidic residues; sequence WAPEEDGEEEEEEDE. Basic and acidic residues-rich tracts occupy residues 183–199 and 229–238; these read RDQR…REPG and HQHDPQDLRH. Ser193 carries the post-translational modification Phosphoserine. Residues 318 to 331 show a composition bias toward polar residues; sequence RNQGQARTNSTSAQ. The segment covering 385-399 has biased composition (basic and acidic residues); sequence GSDKDSDADDSKTET. Over residues 400 to 411 the composition is skewed to polar residues; the sequence is SLDTPLSPMSKQ. The tract at residues 419 to 563 is required for interaction with ankyrins; the sequence is DTTEEESESL…KHMAEKMPAK (145 aa). The span at 420-430 shows a compositional bias: acidic residues; it reads TTEEESESLDD. A coiled-coil region spans residues 500–534; that stretch reads IGQLQVIVNDLHSQIESLNEELVQLLLIRDELHTE.

As to quaternary structure, homooligomer (via coiled coil domain). Interacts (via IQ domain) with calmodulin; the interaction is direct and lost in presence of calcium. Interacts with ANK3 (via ANK repeats); required for localization at axon initial segments (AIS) and nodes of Ranvier. Interacts with SPTBN4. Interacts with KCNQ2 and KCNQ3. Highly expressed in brain and to a lower extent in heart and kidney.

It is found in the cell projection. The protein localises to the axon. Its subcellular location is the cytoplasm. May play a role in action potential conduction in myelinated cells through the organization of molecular complexes at nodes of Ranvier and axon initial segments. May also play a role in axon outgrowth and guidance. The sequence is that of IQCJ-SCHIP1 readthrough transcript protein from Homo sapiens (Human).